A 305-amino-acid polypeptide reads, in one-letter code: MRLAFMGTPDFAVPALHALHEAGHEIAVVYSQPPRPAGRGQAVRPQPVHLAAEALGIPVRVPTRLRANHDEHAFFRALDLDAAVVAAYGLILPGAMLTPRAGARLNVHASLLPRWRGAAPIQAAILAGDDESGVTIMQMDEGLDTGAMLLTGRVALTPATTASTLHDDLAAMGGRLIVAALANSETAAIPQPAEGATYAARLTREDGRIDWTRDAVDIDRQVRALTPWPGTFTTLDGTVLKIGAATPIDGPRDAVPGTVLDDRLTVACGQGTLRLTRIQRPGRGMMEADAFLRGQPVPVGTRLGS.

Residue 110 to 113 (SLLP) participates in (6S)-5,6,7,8-tetrahydrofolate binding.

Belongs to the Fmt family.

The catalysed reaction is L-methionyl-tRNA(fMet) + (6R)-10-formyltetrahydrofolate = N-formyl-L-methionyl-tRNA(fMet) + (6S)-5,6,7,8-tetrahydrofolate + H(+). Its function is as follows. Attaches a formyl group to the free amino group of methionyl-tRNA(fMet). The formyl group appears to play a dual role in the initiator identity of N-formylmethionyl-tRNA by promoting its recognition by IF2 and preventing the misappropriation of this tRNA by the elongation apparatus. The chain is Methionyl-tRNA formyltransferase from Gluconacetobacter diazotrophicus (strain ATCC 49037 / DSM 5601 / CCUG 37298 / CIP 103539 / LMG 7603 / PAl5).